A 318-amino-acid polypeptide reads, in one-letter code: MEYIKSNKVVLIGDGAVGSSYAFALVAQGVADELVIIDLDEDKVKGDVMDLNHAAPYGGSPVKIKAGSYKACHNADLVVITAGAAQKPGETRLDLIEKNTKIFKSIVSEVMASGFNGIFLVATNPVDVLTYVTQQVSGLPKEKVIGSGTILDTARFKYELAEEFGVSDRSVHGQIIGEHGDSELAVWSQANIAGQPLYQLLIDDPEKQHRIEEIFVNTRDAAYDIIQAKGATYYGIAMGLVHITKAILNNQNVVLTVSSRLEGEYGQEDVYIGVPTKINRQGAVEVFEIPLNDEEKTLFTRSVGILKEMQNKISHLIA.

Residues Val17, Asp38, Lys43, Tyr69, and 83-84 (GA) each bind NAD(+). Substrate-binding residues include Gln86 and Arg92. Residues Ser105, 122–124 (ATN), and Ser147 contribute to the NAD(+) site. Position 124 to 127 (124 to 127 (NPVD)) interacts with substrate. 152 to 155 (DTAR) lines the substrate pocket. Lys157 and His172 together coordinate beta-D-fructose 1,6-bisphosphate. Residue His179 is the Proton acceptor of the active site. Tyr223 carries the phosphotyrosine modification. Thr232 serves as a coordination point for substrate.

This sequence belongs to the LDH/MDH superfamily. LDH family. In terms of assembly, homotetramer.

The protein localises to the cytoplasm. The enzyme catalyses (S)-lactate + NAD(+) = pyruvate + NADH + H(+). It participates in fermentation; pyruvate fermentation to lactate; (S)-lactate from pyruvate: step 1/1. With respect to regulation, allosterically activated by fructose 1,6-bisphosphate (FBP). Functionally, catalyzes the conversion of lactate to pyruvate. The protein is L-lactate dehydrogenase of Staphylococcus saprophyticus subsp. saprophyticus (strain ATCC 15305 / DSM 20229 / NCIMB 8711 / NCTC 7292 / S-41).